Here is a 694-residue protein sequence, read N- to C-terminus: Methionine--tRNA ligase (694 aa).

Positions 12–22 match the 'HIGH' region motif; that stretch reads PYANGPLHLGH. Zn(2+) contacts are provided by cysteine 143, cysteine 146, cysteine 156, and cysteine 159. The 'KMSKS' region motif lies at 330-334; that stretch reads KMSKS. Lysine 333 contributes to the ATP binding site. Positions 550–577 are disordered; sequence LAAPATPATASKPAPAKADAKPAAAANP. Positions 551–575 are enriched in low complexity; that stretch reads AAPATPATASKPAPAKADAKPAAAA. The tRNA-binding domain maps to 591–694; it reads DFAKLDLRIG…SGAQPGMPVR (104 aa).

Belongs to the class-I aminoacyl-tRNA synthetase family. MetG type 1 subfamily. Homodimer. The cofactor is Zn(2+).

Its subcellular location is the cytoplasm. The catalysed reaction is tRNA(Met) + L-methionine + ATP = L-methionyl-tRNA(Met) + AMP + diphosphate. Is required not only for elongation of protein synthesis but also for the initiation of all mRNA translation through initiator tRNA(fMet) aminoacylation. The polypeptide is Methionine--tRNA ligase (Xanthomonas axonopodis pv. citri (strain 306)).